Here is a 240-residue protein sequence, read N- to C-terminus: EF-hand domain-containing protein D1 (240 aa).

The segment at 17–54 is disordered; sequence EVRAETDQGDPQPAPCDAPAGHPEPEPPARAPTASADS. EF-hand domains lie at 91 to 126 and 127 to 162; these read RLLKDLEKMFKTYDAGRDGFIDLMELKLMMEKLGAP and QTHLGLKSMIKEVDEDFDGKLSFREFLLIFHKAAAG. Residues Asp104, Asp108, Glu115, Asp140, Asp142, Asp144, Lys146, and Glu151 each coordinate Ca(2+).

Widely expressed. Highest expression in testis, followed by ovary, kidney, cerebrum, cerebellum, heart, liver, and spleen. In the cerebrum and cerebellum, undetectable at embryonic stages, expression increases after birth up to adult stage. In adult CNS, detected in neurons of the cerebellum, cerebrum and hippocampus formation, including dentate gyrus and Cornu Ammonis, but not in the white matter. In the testis, expressed in spermatocytes, but not in spermatogonia nor in interstitial cells. In ovary, found predominantly in mural granulosa cells and those of the cumulus oophorus. In kidney, expressed in collecting ducts, but not in glomeruli. Not detected in skeletal muscle.

The protein resides in the mitochondrion inner membrane. Acts as a calcium sensor for mitochondrial flash (mitoflash) activation, an event characterized by stochastic bursts of superoxide production. May play a role in neuronal differentiation. The protein is EF-hand domain-containing protein D1 (Efhd1) of Mus musculus (Mouse).